The chain runs to 110 residues: Dermcidin (110 aa).

The signal sequence occupies residues 1-19; it reads MRFMTLLFLTALAGALVCA. Positions 24 to 70 are disordered; that stretch reads AASAPGSGNPCHEASAAQKENAGEDPGLARQAPKPRKQRSSLLEKGL. 2 O-linked (Xyl...) (chondroitin sulfate) serine glycosylation sites follow: Ser30 and Ser38. The propeptide occupies 50-62; the sequence is GLARQAPKPRKQR. The helical transmembrane segment at 64 to 108 threads the bilayer; it reads SLLEKGLDGAKKAVGGLGKLGKDAVEDLESVGKGAVHDVKDVLDS. Glu67 serves as a coordination point for Zn(2+). Lys68 is subject to N6-acetyllysine. Positions 71, 86, 90, 100, and 104 each coordinate Zn(2+). A propeptide is located at residue Leu110.

As to quaternary structure, homohexamer. It depends on Mn(2+) as a cofactor. Requires Zn(2+) as cofactor. As to expression, detected in urine (at protein level). Constitutively expressed in eccrine sweat gland cells (at protein level). Secreted into the sweat at a concentration of 1-10 micrograms/ml.

The protein localises to the secreted. It localises to the membrane. In terms of biological role, found in sweat, has an antimicrobial activity during early bacterial colonization. The secreted peptide assembles into homohexameric complexes that can associate with and also insert into pathogen membranes. Once inserted in bacteria membranes forms anion channels probably altering the transmembrane potential essential for bacterial survival. Highly effective against E.coli, E.faecalis, S.aureus and C.albicans. Optimal pH and salt concentration resemble the conditions in sweat. Also exhibits proteolytic activity, cleaving on the C-terminal side of Arg and, to a lesser extent, Lys residues. Promotes survival of neurons and displays phosphatase activity. It may bind IgG. In Homo sapiens (Human), this protein is Dermcidin.